Consider the following 189-residue polypeptide: Elongation factor P (189 aa).

K35 bears the N6-(3,6-diaminohexanoyl)-5-hydroxylysine mark.

It belongs to the elongation factor P family. May be beta-lysylated on the epsilon-amino group of Lys-35 by the combined action of EpmA and EpmB, and then hydroxylated on the C5 position of the same residue by EpmC (if this protein is present). Lysylation is critical for the stimulatory effect of EF-P on peptide-bond formation. The lysylation moiety may extend toward the peptidyltransferase center and stabilize the terminal 3-CCA end of the tRNA. Hydroxylation of the C5 position on Lys-35 may allow additional potential stabilizing hydrogen-bond interactions with the P-tRNA.

The protein resides in the cytoplasm. Its pathway is protein biosynthesis; polypeptide chain elongation. Functionally, involved in peptide bond synthesis. Alleviates ribosome stalling that occurs when 3 or more consecutive Pro residues or the sequence PPG is present in a protein, possibly by augmenting the peptidyl transferase activity of the ribosome. Modification of Lys-35 is required for alleviation. In Wigglesworthia glossinidia brevipalpis, this protein is Elongation factor P.